The following is a 226-amino-acid chain: ATP synthase subunit a (226 aa).

Transmembrane regions (helical) follow at residues 18–38 (FITG…SLGA), 76–96 (YFPL…IGII), 105–125 (SWSF…FEGI), 134–154 (FAHF…IEII), 179–199 (LIML…VLFF), and 201–221 (GILQ…GAVL).

It belongs to the ATPase A chain family. In terms of assembly, F-type ATPases have 2 components, CF(1) - the catalytic core - and CF(0) - the membrane proton channel. CF(1) has five subunits: alpha(3), beta(3), gamma(1), delta(1), epsilon(1). CF(0) has three main subunits: a(1), b(2) and c(9-12). The alpha and beta chains form an alternating ring which encloses part of the gamma chain. CF(1) is attached to CF(0) by a central stalk formed by the gamma and epsilon chains, while a peripheral stalk is formed by the delta and b chains.

It is found in the cell inner membrane. In terms of biological role, key component of the proton channel; it plays a direct role in the translocation of protons across the membrane. The chain is ATP synthase subunit a from Helicobacter acinonychis (strain Sheeba).